Here is a 62-residue protein sequence, read N- to C-terminus: Large ribosomal subunit protein bL32 (62 aa).

Positions 1-19 (MPNPKRRHSKARTGNRRAH) are enriched in basic residues. The tract at residues 1–23 (MPNPKRRHSKARTGNRRAHDHLS) is disordered.

The protein belongs to the bacterial ribosomal protein bL32 family.

This chain is Large ribosomal subunit protein bL32, found in Koribacter versatilis (strain Ellin345).